A 345-amino-acid chain; its full sequence is Tryptophan--tRNA ligase (345 aa).

Residues 22–24 (QPS) and 30–31 (GN) contribute to the ATP site. A 'HIGH' region motif is present at residues 23-31 (PSGELTIGN). D146 is a binding site for L-tryptophan. ATP contacts are provided by residues 158–160 (GID), V197, and 206–210 (KMSKS). Residues 206-210 (KMSKS) carry the 'KMSKS' region motif.

It belongs to the class-I aminoacyl-tRNA synthetase family. In terms of assembly, homodimer.

The protein resides in the cytoplasm. The enzyme catalyses tRNA(Trp) + L-tryptophan + ATP = L-tryptophyl-tRNA(Trp) + AMP + diphosphate + H(+). Functionally, catalyzes the attachment of tryptophan to tRNA(Trp). The polypeptide is Tryptophan--tRNA ligase (Photorhabdus laumondii subsp. laumondii (strain DSM 15139 / CIP 105565 / TT01) (Photorhabdus luminescens subsp. laumondii)).